We begin with the raw amino-acid sequence, 88 residues long: Sec-independent protein translocase protein TatA (88 aa).

A helical transmembrane segment spans residues 3–23; that stretch reads IFGVGLPEVTVILILALLIFG. Over residues 56 to 66 the composition is skewed to basic and acidic residues; sequence MKEEDKDESPK. The disordered stretch occupies residues 56-88; it reads MKEEDKDESPKSIESNQSNEINQEKIDSENSNN. The span at 67–76 shows a compositional bias: polar residues; that stretch reads SIESNQSNEI. A compositionally biased stretch (basic and acidic residues) spans 77 to 88; that stretch reads NQEKIDSENSNN.

Belongs to the TatA/E family. In terms of assembly, forms a complex with TatC.

It localises to the cell inner membrane. Functionally, part of the twin-arginine translocation (Tat) system that transports large folded proteins containing a characteristic twin-arginine motif in their signal peptide across membranes. TatA could form the protein-conducting channel of the Tat system. The sequence is that of Sec-independent protein translocase protein TatA from Prochlorococcus marinus (strain MIT 9301).